We begin with the raw amino-acid sequence, 351 residues long: Histidinol-phosphate aminotransferase (351 aa).

N6-(pyridoxal phosphate)lysine is present on Lys-213.

The protein belongs to the class-II pyridoxal-phosphate-dependent aminotransferase family. Histidinol-phosphate aminotransferase subfamily. In terms of assembly, homodimer. The cofactor is pyridoxal 5'-phosphate.

The catalysed reaction is L-histidinol phosphate + 2-oxoglutarate = 3-(imidazol-4-yl)-2-oxopropyl phosphate + L-glutamate. It functions in the pathway amino-acid biosynthesis; L-histidine biosynthesis; L-histidine from 5-phospho-alpha-D-ribose 1-diphosphate: step 7/9. This Thermoanaerobacter pseudethanolicus (strain ATCC 33223 / 39E) (Clostridium thermohydrosulfuricum) protein is Histidinol-phosphate aminotransferase.